An 849-amino-acid chain; its full sequence is Thrombospondin type-1 domain-containing protein 1 (849 aa).

The signal sequence occupies residues 1–24 (MKQTLKDFSNLLLVVLCDYVLGEA). The Extracellular segment spans residues 25–413 (EHLVLGEPGH…QPQAPVKSNN (389 aa)). 7 N-linked (GlcNAc...) asparagine glycosylation sites follow: asparagine 39, asparagine 50, asparagine 55, asparagine 66, asparagine 77, asparagine 106, and asparagine 303. The region spanning 340-393 (IETWGLWQPWSQCSASCGDGVRERRRVCLTSSPSRPGCPGMSSETSPCSLEDCA) is the TSP type-1 domain. Intrachain disulfides connect cysteine 352/cysteine 387, cysteine 356/cysteine 392, and cysteine 367/cysteine 377. A helical membrane pass occupies residues 414-434 (VVTVTGISLCLFIIVATVLIT). The Cytoplasmic segment spans residues 435–849 (LWRKLGRAPK…STLSVEKLVI (415 aa)). Residue serine 463 is modified to Phosphoserine. Disordered regions lie at residues 472 to 516 (SEPR…SESF), 595 to 799 (KSPF…KCQS), and 828 to 849 (GYFG…KLVI). The span at 479–493 (SDAGDGPAGSPGDPG) shows a compositional bias: low complexity. A compositionally biased stretch (basic residues) spans 636–651 (SQVRSHSRGSHFRRTA). Over residues 652–666 (SFHEARQARPFRERS) the composition is skewed to basic and acidic residues. Pro residues predominate over residues 720-732 (SPLPKPHSLGPPP).

Part of a complex composed of THSD1, PTK2/FAK1, TLN1 and VCL. Interacts with TLN1.

Its subcellular location is the endosome membrane. It localises to the cell junction. The protein resides in the focal adhesion. Is a positive regulator of nascent focal adhesion assembly, involved in the modulation of endothelial cell attachment to the extracellular matrix. The protein is Thrombospondin type-1 domain-containing protein 1 (THSD1) of Bos taurus (Bovine).